Consider the following 979-residue polypeptide: Peptidyl-glycine alpha-amidating monooxygenase (979 aa).

An N-terminal signal peptide occupies residues 1 to 24; the sequence is MAGRARSRLLLLLGLLALQSSCLA. Positions 1-497 are peptidylglycine alpha-hydroxylating monooxygenase; that stretch reads MAGRARSRLL…EGPWEPELAG (497 aa). A propeptide spanning residues 25–34 is cleaved from the precursor; sequence FRSPLSVFKR. Topologically, residues 35–869 are intragranular; sequence FKETTRSFSN…KKLIKDPGSG (835 aa). 5 disulfide bridges follow: cysteine 46/cysteine 185, cysteine 80/cysteine 125, cysteine 113/cysteine 130, cysteine 226/cysteine 333, and cysteine 292/cysteine 314. Positions 106 and 107 each coordinate Cu(2+). Cu(2+)-binding residues include histidine 171, histidine 241, histidine 243, and methionine 313. The tract at residues 498-823 is peptidyl-alpha-hydroxyglycine alpha-amidating lyase; the sequence is DFHVEEALEW…SRLEVEHRSV (326 aa). NHL repeat units lie at residues 501-544, 570-611, 620-665, and 673-717; these read VEEA…NSFD, AEIL…LEPR, LGRS…FSPS, and GEES…FKTD. Valine 520 lines the Ca(2+) pocket. A protein is bound at residue arginine 533. Residue histidine 585 coordinates Zn(2+). Ca(2+) is bound at residue leucine 587. An intrachain disulfide couples cysteine 634 to cysteine 655. Tyrosine 654 is a binding site for a protein. Histidine 690 provides a ligand contact to Zn(2+). The cysteines at positions 702 and 713 are disulfide-linked. Residue arginine 706 coordinates a protein. Residue asparagine 765 is glycosylated (N-linked (GlcNAc...) asparagine). The NHL 5 repeat unit spans residues 769–812; that stretch reads GEIIDVFKPVRKHFDMPHDIVASEDGTVYIGDAHTNTVWKFTLT. Zn(2+) is bound at residue histidine 786. Aspartate 787 contacts Ca(2+). The helical transmembrane segment at 870-893 threads the bilayer; sequence VPVVLITTLLVIPVVVLLAIAMFI. The Cytoplasmic segment spans residues 894 to 979; that stretch reads RWKKSRAFGD…APLPTPAPSS (86 aa). Phosphoserine occurs at positions 924, 925, 935, and 948. The interval 931–948 is interaction with RASSF9; it reads NFFASRKGYSRKGFDRVS. Residues 943-979 are disordered; the sequence is GFDRVSTEGSDQEKDEDDGSESEEEYSAPLPTPAPSS. Threonine 949 bears the Phosphothreonine mark. Serine 952 is subject to Phosphoserine; by UHMK1. Acidic residues predominate over residues 955–968; sequence EKDEDDGSESEEEY. Residue serine 964 is modified to Phosphoserine.

This sequence in the C-terminal section; belongs to the peptidyl-alpha-hydroxyglycine alpha-amidating lyase family. The protein in the N-terminal section; belongs to the copper type II ascorbate-dependent monooxygenase family. As to quaternary structure, monomer. Interacts with RASSF9. Requires Zn(2+) as cofactor. Cu(2+) serves as cofactor.

It localises to the cytoplasmic vesicle. Its subcellular location is the secretory vesicle membrane. The enzyme catalyses a [peptide]-C-terminal glycine + 2 L-ascorbate + O2 = a [peptide]-C-terminal (2S)-2-hydroxyglycine + 2 monodehydro-L-ascorbate radical + H2O. It carries out the reaction a [peptide]-C-terminal (2S)-2-hydroxyglycine = a [peptide]-C-terminal amide + glyoxylate. It catalyses the reaction N-dodecanoylglycine + 2 L-ascorbate + O2 = N-dodecanoyl-(2S)-hydroxyglycine + 2 monodehydro-L-ascorbate radical + H2O. The catalysed reaction is N-dodecanoyl-(2S)-hydroxyglycine = dodecanamide + glyoxylate. The enzyme catalyses N-(9Z,12Z,15Z)-octadecatrienoylglycine + 2 L-ascorbate + O2 = N-(9Z,12Z,15Z)-octadecatrienoyl-(2S)-hydroxyglycine + 2 monodehydro-L-ascorbate radical + H2O. It carries out the reaction N-(9Z,12Z,15Z)-octadecatrienoyl-(2S)-hydroxyglycine = (9Z,12Z,15Z)-octadecatrienamide + glyoxylate. It catalyses the reaction N-(9Z-octadecenoyl)glycine + 2 L-ascorbate + O2 = N-(9Z-octadecenoyl)-(2S)-hydroxyglycine + 2 monodehydro-L-ascorbate radical + H2O. The catalysed reaction is N-(9Z-octadecenoyl)-(2S)-hydroxyglycine = (9Z)-octadecenamide + glyoxylate. The enzyme catalyses N-tetradecanoylglycine + 2 L-ascorbate + O2 = N-tetradecanoyl-(2S)-hydroxyglycine + 2 monodehydro-L-ascorbate radical + H2O. It carries out the reaction N-tetradecanoyl-(2S)-hydroxyglycine = tetradecamide + glyoxylate. It catalyses the reaction N-decanoylglycine + 2 L-ascorbate + O2 = N-decanoyl-(2S)-hydroxyglycine + 2 monodehydro-L-ascorbate radical + H2O. The catalysed reaction is N-decanoyl-(2S)-hydroxyglycine = decanamide + glyoxylate. The enzyme catalyses N-octanoylglycine + 2 L-ascorbate + O2 = N-octanoyl-(2S)-hydroxyglycine + 2 monodehydro-L-ascorbate radical + H2O. It carries out the reaction N-octanoyl-(2S)-hydroxyglycine = octanamide + glyoxylate. With respect to regulation, PAM activity is inhibited by EDTA, phenylglyoxal and diethyl pyrocarbonate. PAL activity is stimulated by cadmium and inhibited by mercury. Its function is as follows. Bifunctional enzyme that catalyzes amidation of the C-terminus of proteins. Alpha-amidation is present at the C-terminus of many endocrine hormones and neuropeptides and is required for their activity. C-terminal amidation also takes place in response to protein fragmentation triggered by oxidative stress, promoting degradation of amidated protein fragments by the proteasome. Alpha-amidation involves two sequential reactions, both of which are catalyzed by separate catalytic domains of the enzyme. The first step, catalyzed by peptidyl alpha-hydroxylating monooxygenase (PHM) domain, is the copper-, ascorbate-, and O2- dependent stereospecific hydroxylation (with S stereochemistry) at the alpha-carbon (C-alpha) of the C-terminal glycine of the peptidylglycine substrate. The second step, catalyzed by the peptidylglycine amidoglycolate lyase (PAL) domain, is the zinc-dependent cleavage of the N-C-alpha bond, producing the alpha-amidated peptide and glyoxylate. Similarly, catalyzes the two-step conversion of an N-fatty acylglycine to a primary fatty acid amide and glyoxylate. The chain is Peptidyl-glycine alpha-amidating monooxygenase from Mus musculus (Mouse).